The primary structure comprises 182 residues: ATP synthase subunit b, chloroplastic (182 aa).

A helical membrane pass occupies residues 29 to 47 (IINLALLIVLVINVAKDVL).

Belongs to the ATPase B chain family. As to quaternary structure, F-type ATPases have 2 components, F(1) - the catalytic core - and F(0) - the membrane proton channel. F(1) has five subunits: alpha(3), beta(3), gamma(1), delta(1), epsilon(1). F(0) has four main subunits: a(1), b(1), b'(1) and c(10-14). The alpha and beta chains form an alternating ring which encloses part of the gamma chain. F(1) is attached to F(0) by a central stalk formed by the gamma and epsilon chains, while a peripheral stalk is formed by the delta, b and b' chains.

The protein resides in the plastid. Its subcellular location is the chloroplast thylakoid membrane. Its function is as follows. F(1)F(0) ATP synthase produces ATP from ADP in the presence of a proton or sodium gradient. F-type ATPases consist of two structural domains, F(1) containing the extramembraneous catalytic core and F(0) containing the membrane proton channel, linked together by a central stalk and a peripheral stalk. During catalysis, ATP synthesis in the catalytic domain of F(1) is coupled via a rotary mechanism of the central stalk subunits to proton translocation. Component of the F(0) channel, it forms part of the peripheral stalk, linking F(1) to F(0). This Heterosigma akashiwo (strain NIES-293 / 8280G21-1) protein is ATP synthase subunit b, chloroplastic.